Reading from the N-terminus, the 121-residue chain is Small ribosomal subunit protein uS13 (121 aa).

A disordered region spans residues 93–121 (RGLPMRGQRTRTNARTRKGPRKGAAALKK).

Belongs to the universal ribosomal protein uS13 family. Part of the 30S ribosomal subunit. Forms a loose heterodimer with protein S19. Forms two bridges to the 50S subunit in the 70S ribosome.

Its function is as follows. Located at the top of the head of the 30S subunit, it contacts several helices of the 16S rRNA. In the 70S ribosome it contacts the 23S rRNA (bridge B1a) and protein L5 of the 50S subunit (bridge B1b), connecting the 2 subunits; these bridges are implicated in subunit movement. Contacts the tRNAs in the A and P-sites. The chain is Small ribosomal subunit protein uS13 from Paracidovorax citrulli (strain AAC00-1) (Acidovorax citrulli).